The chain runs to 217 residues: Probable GTP-binding protein EngB (217 aa).

The 184-residue stretch at 24-207 folds into the EngB-type G domain; that stretch reads SQPEICFAGR…HALIESWLIP (184 aa). GTP contacts are provided by residues 32–39, 59–63, 81–84, 148–151, and 185–188; these read GRSNAGKS, GRTQH, DLPG, TKCD, and LFSA. Residues Ser-39 and Thr-61 each coordinate Mg(2+).

Belongs to the TRAFAC class TrmE-Era-EngA-EngB-Septin-like GTPase superfamily. EngB GTPase family. Requires Mg(2+) as cofactor.

Functionally, necessary for normal cell division and for the maintenance of normal septation. The protein is Probable GTP-binding protein EngB of Paraburkholderia xenovorans (strain LB400).